A 457-amino-acid chain; its full sequence is ATP synthase subunit beta (457 aa).

147 to 154 lines the ATP pocket; the sequence is GGAGVGKT.

Belongs to the ATPase alpha/beta chains family. As to quaternary structure, F-type ATPases have 2 components, CF(1) - the catalytic core - and CF(0) - the membrane proton channel. CF(1) has five subunits: alpha(3), beta(3), gamma(1), delta(1), epsilon(1). CF(0) has three main subunits: a(1), b(2) and c(9-12). The alpha and beta chains form an alternating ring which encloses part of the gamma chain. CF(1) is attached to CF(0) by a central stalk formed by the gamma and epsilon chains, while a peripheral stalk is formed by the delta and b chains.

The protein localises to the cell inner membrane. It catalyses the reaction ATP + H2O + 4 H(+)(in) = ADP + phosphate + 5 H(+)(out). Produces ATP from ADP in the presence of a proton gradient across the membrane. The catalytic sites are hosted primarily by the beta subunits. In Pasteurella multocida (strain Pm70), this protein is ATP synthase subunit beta.